Here is a 387-residue protein sequence, read N- to C-terminus: 3-ketoacyl-CoA thiolase (387 aa).

Cys91 acts as the Acyl-thioester intermediate in catalysis. Catalysis depends on proton acceptor residues His343 and Cys373.

Belongs to the thiolase-like superfamily. Thiolase family. Heterotetramer of two alpha chains (FadB) and two beta chains (FadA).

The protein resides in the cytoplasm. It carries out the reaction an acyl-CoA + acetyl-CoA = a 3-oxoacyl-CoA + CoA. It functions in the pathway lipid metabolism; fatty acid beta-oxidation. In terms of biological role, catalyzes the final step of fatty acid oxidation in which acetyl-CoA is released and the CoA ester of a fatty acid two carbons shorter is formed. The sequence is that of 3-ketoacyl-CoA thiolase from Serratia proteamaculans (strain 568).